The sequence spans 404 residues: Probable eukaryotic initiation factor 4A (404 aa).

A disordered region spans residues 1-28 (MAQQGKVEPQDQDSFLDDQPGIRPIPSF). The Q motif motif lies at 26–54 (PSFDDMPLHQNLLRGIYSHGFEKPSSIQQ). A Helicase ATP-binding domain is found at 57–231 (IVPFTRGGDI…KKFMRDPTRI (175 aa)). Residue 70-77 (AQSGTGKT) coordinates ATP. The DEAD box signature appears at 179 to 182 (DEAD). The Helicase C-terminal domain occupies 242–402 (GIKQFFIAVE…ELPVDFAAYL (161 aa)).

This sequence belongs to the DEAD box helicase family. eIF4A subfamily. As to quaternary structure, eIF4F is a multi-subunit complex, the composition of which varies with external and internal environmental conditions. It is composed of at least EIF4A, EIF4E and EIF4G.

It carries out the reaction ATP + H2O = ADP + phosphate + H(+). Functionally, ATP-dependent RNA helicase which is a subunit of the eIF4F complex involved in cap recognition and is required for mRNA binding to ribosome. In the current model of translation initiation, eIF4A unwinds RNA secondary structures in the 5'-UTR of mRNAs which is necessary to allow efficient binding of the small ribosomal subunit, and subsequent scanning for the initiator codon. The protein is Probable eukaryotic initiation factor 4A of Trypanosoma brucei brucei (strain 927/4 GUTat10.1).